A 301-amino-acid chain; its full sequence is Acetylglutamate kinase (301 aa).

Substrate is bound by residues 71-72 (GG), R93, and N198.

It belongs to the acetylglutamate kinase family. ArgB subfamily.

The protein localises to the cytoplasm. It catalyses the reaction N-acetyl-L-glutamate + ATP = N-acetyl-L-glutamyl 5-phosphate + ADP. The protein operates within amino-acid biosynthesis; L-arginine biosynthesis; N(2)-acetyl-L-ornithine from L-glutamate: step 2/4. Catalyzes the ATP-dependent phosphorylation of N-acetyl-L-glutamate. This is Acetylglutamate kinase from Zymomonas mobilis subsp. mobilis (strain ATCC 31821 / ZM4 / CP4).